Consider the following 491-residue polypeptide: Glutamyl-tRNA(Gln) amidotransferase subunit A (491 aa).

Active-site charge relay system residues include lysine 79 and serine 158. The active-site Acyl-ester intermediate is serine 182.

Belongs to the amidase family. GatA subfamily. As to quaternary structure, heterotrimer of A, B and C subunits.

The catalysed reaction is L-glutamyl-tRNA(Gln) + L-glutamine + ATP + H2O = L-glutaminyl-tRNA(Gln) + L-glutamate + ADP + phosphate + H(+). Its function is as follows. Allows the formation of correctly charged Gln-tRNA(Gln) through the transamidation of misacylated Glu-tRNA(Gln) in organisms which lack glutaminyl-tRNA synthetase. The reaction takes place in the presence of glutamine and ATP through an activated gamma-phospho-Glu-tRNA(Gln). This chain is Glutamyl-tRNA(Gln) amidotransferase subunit A, found in Anaplasma phagocytophilum (strain HZ).